We begin with the raw amino-acid sequence, 195 residues long: Dephospho-CoA kinase (195 aa).

A DPCK domain is found at 3–195 (IVGLTGGIGS…IALHENYLNH (193 aa)). ATP is bound at residue 11-16 (GSGKSA).

This sequence belongs to the CoaE family.

It is found in the cytoplasm. It carries out the reaction 3'-dephospho-CoA + ATP = ADP + CoA + H(+). The protein operates within cofactor biosynthesis; coenzyme A biosynthesis; CoA from (R)-pantothenate: step 5/5. Catalyzes the phosphorylation of the 3'-hydroxyl group of dephosphocoenzyme A to form coenzyme A. This chain is Dephospho-CoA kinase, found in Acinetobacter baylyi (strain ATCC 33305 / BD413 / ADP1).